The sequence spans 429 residues: Palmitoyltransferase ZDHHC23 (429 aa).

At 1 to 81 (MKPVKKKKTE…RIPWLRGAKK (81 aa)) the chain is on the cytoplasmic side. The helical transmembrane segment at 82–102 (VNISILPPLVLLPVLLRVASW) threads the bilayer. H103 is a topological domain (lumenal). The helical transmembrane segment at 104–124 (FLLGVVVLTSLPMLALWYYYL) threads the bilayer. At 125–130 (THRRKE) the chain is on the cytoplasmic side. A helical transmembrane segment spans residues 131-151 (QTLFFLSLGLFSLGYMYYVFL). The Lumenal portion of the chain corresponds to 152 to 159 (QEVVPQGH). A helical membrane pass occupies residues 160-180 (VGPAQLALLTCGLFLILVALY). At 181 to 296 (RAKKNPGYLS…NSCVGESNHQ (116 aa)) the chain is on the cytoplasmic side. Residues 212 to 247 (QEKTKGFPGTDTSGSLNNRTLKDDAKGSSRVGLDSP) are disordered. Positions 221–230 (TDTSGSLNNR) are enriched in polar residues. The 51-residue stretch at 253-303 (DWCAKCQLVRPARAWHCRICGICVRRMDHHCVWINSCVGESNHQAFILALS) folds into the DHHC domain. The active-site S-palmitoyl cysteine intermediate is the C283. Residues 297–317 (AFILALSIFLLTSVYGISLTL) traverse the membrane as a helical segment. The Lumenal segment spans residues 318–347 (NTICRDRSLFTALFYCPGVYANYSSALSFT). Residues 348–368 (CVWYSVIITAGMAYIFLIQLI) form a helical membrane-spanning segment. The Cytoplasmic portion of the chain corresponds to 369-429 (NISYNVTERE…TVHTPAEDIV (61 aa)). Residues 426-429 (EDIV) are interaction with NOS1.

The protein belongs to the DHHC palmitoyltransferase family. In terms of assembly, interacts with NOS1. As to expression, expressed in the brain (at protein level), with highest levels in olfactory bulb, piriform cortex and hippocampus.

The protein localises to the golgi apparatus membrane. The protein resides in the golgi apparatus. It is found in the trans-Golgi network membrane. It carries out the reaction L-cysteinyl-[protein] + hexadecanoyl-CoA = S-hexadecanoyl-L-cysteinyl-[protein] + CoA. Its function is as follows. Palmitoyltransferase that could catalyze the addition of palmitate onto various protein substrates and be involved in a variety of cellular processes. Palmitoyltransferase that mediates palmitoylation of KCNMA1, regulating localization of KCNMA1 to the plasma membrane. May be involved in NOS1 regulation and targeting to the synaptic membrane. This chain is Palmitoyltransferase ZDHHC23, found in Rattus norvegicus (Rat).